The sequence spans 904 residues: Protein translocase subunit SecA (904 aa).

ATP contacts are provided by residues Q89, 107–111, and D496; that span reads GEGKT. The tract at residues 870-904 is disordered; it reads GGFQELSSGTPSPTVTVTTSSGGGTERKTSRRRKR. Positions 876–889 are enriched in low complexity; it reads SSGTPSPTVTVTTS.

The protein belongs to the SecA family. In terms of assembly, monomer and homodimer. Part of the essential Sec protein translocation apparatus which comprises SecA, SecYEG and auxiliary proteins SecDF. Other proteins may also be involved.

It localises to the cell inner membrane. It is found in the cytoplasm. The enzyme catalyses ATP + H2O + cellular proteinSide 1 = ADP + phosphate + cellular proteinSide 2.. In terms of biological role, part of the Sec protein translocase complex. Interacts with the SecYEG preprotein conducting channel. Has a central role in coupling the hydrolysis of ATP to the transfer of proteins into and across the cell membrane, serving as an ATP-driven molecular motor driving the stepwise translocation of polypeptide chains across the membrane. The chain is Protein translocase subunit SecA from Leptospira borgpetersenii serovar Hardjo-bovis (strain L550).